The primary structure comprises 335 residues: Phosphate acyltransferase (335 aa).

This sequence belongs to the PlsX family. As to quaternary structure, homodimer. Probably interacts with PlsY.

It localises to the cytoplasm. It catalyses the reaction a fatty acyl-[ACP] + phosphate = an acyl phosphate + holo-[ACP]. Its pathway is lipid metabolism; phospholipid metabolism. In terms of biological role, catalyzes the reversible formation of acyl-phosphate (acyl-PO(4)) from acyl-[acyl-carrier-protein] (acyl-ACP). This enzyme utilizes acyl-ACP as fatty acyl donor, but not acyl-CoA. This is Phosphate acyltransferase from Streptococcus equi subsp. zooepidemicus (strain MGCS10565).